A 284-amino-acid polypeptide reads, in one-letter code: RNase adapter protein RapZ (284 aa).

ATP is bound at residue 8–15; it reads GRSGSGKS. 56–59 is a GTP binding site; that stretch reads DVRN. Residues 266–284 form an RNA-binding region; the sequence is RSRGKNVQLRHRTLEKRKE.

The protein belongs to the RapZ-like family. RapZ subfamily. As to quaternary structure, homotrimer.

In terms of biological role, modulates the synthesis of GlmS, by affecting the processing and stability of the regulatory small RNA GlmZ. When glucosamine-6-phosphate (GlcN6P) concentrations are high in the cell, RapZ binds GlmZ and targets it to cleavage by RNase E. Consequently, GlmZ is inactivated and unable to activate GlmS synthesis. Under low GlcN6P concentrations, RapZ is sequestered and inactivated by an other regulatory small RNA, GlmY, preventing GlmZ degradation and leading to synthesis of GlmS. This chain is RNase adapter protein RapZ, found in Hamiltonella defensa subsp. Acyrthosiphon pisum (strain 5AT).